Consider the following 291-residue polypeptide: Homoserine kinase (291 aa).

Residue 79–89 participates in ATP binding; the sequence is PLARGLGSSSA.

Belongs to the GHMP kinase family. Homoserine kinase subfamily.

It localises to the cytoplasm. The catalysed reaction is L-homoserine + ATP = O-phospho-L-homoserine + ADP + H(+). It functions in the pathway amino-acid biosynthesis; L-threonine biosynthesis; L-threonine from L-aspartate: step 4/5. Catalyzes the ATP-dependent phosphorylation of L-homoserine to L-homoserine phosphate. The chain is Homoserine kinase from Leuconostoc citreum (strain KM20).